A 622-amino-acid chain; its full sequence is Chaperone protein HscA homolog (622 aa).

Belongs to the heat shock protein 70 family.

Chaperone involved in the maturation of iron-sulfur cluster-containing proteins. Has a low intrinsic ATPase activity which is markedly stimulated by HscB. The polypeptide is Chaperone protein HscA homolog (Delftia acidovorans (strain DSM 14801 / SPH-1)).